A 203-amino-acid polypeptide reads, in one-letter code: Large ribosomal subunit protein bL25 (203 aa).

This sequence belongs to the bacterial ribosomal protein bL25 family. CTC subfamily. In terms of assembly, part of the 50S ribosomal subunit; part of the 5S rRNA/L5/L18/L25 subcomplex. Contacts the 5S rRNA. Binds to the 5S rRNA independently of L5 and L18.

This is one of the proteins that binds to the 5S RNA in the ribosome where it forms part of the central protuberance. This chain is Large ribosomal subunit protein bL25, found in Rickettsia conorii (strain ATCC VR-613 / Malish 7).